The following is an 81-amino-acid chain: MKTGIHPDYVETTVQCGCGNTFTTRSTKKTGNIVVEVCSQCHPFYTGKQKILDSGGRVARFEKRYGKRGANKAANTDSADK.

Residues Cys-16, Cys-18, Cys-38, and Cys-41 each coordinate Zn(2+).

It belongs to the bacterial ribosomal protein bL31 family. Type A subfamily. Part of the 50S ribosomal subunit. It depends on Zn(2+) as a cofactor.

Binds the 23S rRNA. The protein is Large ribosomal subunit protein bL31 of Mycobacterium sp. (strain JLS).